The following is a 585-amino-acid chain: Pentatricopeptide repeat-containing protein At4g21170 (585 aa).

PPR repeat units lie at residues Leu-152–Pro-186, Ser-187–Ser-221, Asp-222–Glu-247, Ser-252–Leu-286, Ser-287–Thr-321, Asp-324–Arg-358, Trp-360–Val-394, Asp-396–Pro-431, Cys-432–Phe-466, Asp-467–Leu-501, Asp-502–Ile-534, and Asn-538–Pro-572.

The protein belongs to the PPR family. P subfamily.

The polypeptide is Pentatricopeptide repeat-containing protein At4g21170 (Arabidopsis thaliana (Mouse-ear cress)).